Consider the following 352-residue polypeptide: S-adenosylmethionine:tRNA ribosyltransferase-isomerase (352 aa).

Belongs to the QueA family. As to quaternary structure, monomer.

The protein resides in the cytoplasm. The enzyme catalyses 7-aminomethyl-7-carbaguanosine(34) in tRNA + S-adenosyl-L-methionine = epoxyqueuosine(34) in tRNA + adenine + L-methionine + 2 H(+). The protein operates within tRNA modification; tRNA-queuosine biosynthesis. Transfers and isomerizes the ribose moiety from AdoMet to the 7-aminomethyl group of 7-deazaguanine (preQ1-tRNA) to give epoxyqueuosine (oQ-tRNA). This is S-adenosylmethionine:tRNA ribosyltransferase-isomerase from Paraburkholderia phytofirmans (strain DSM 17436 / LMG 22146 / PsJN) (Burkholderia phytofirmans).